Reading from the N-terminus, the 123-residue chain is MDSKDHRNELNRFFKSFVHAGRGIWETARTERNFQFHAAAACAVLICGFLVELSIIEWMIIFLLIGGMFSLELLNTAIEHTVDLITDKHHPLAKAAKDAAAGAVCVFAVISCIIGLLIFLPKL.

At 1–33 (MDSKDHRNELNRFFKSFVHAGRGIWETARTERN) the chain is on the cytoplasmic side. Residues 34–51 (FQFHAAAACAVLICGFLV) traverse the membrane as a helical segment. The Extracellular segment spans residues 52–57 (ELSIIE). The chain crosses the membrane as a helical span at residues 58–74 (WMIIFLLIGGMFSLELL). At 75–99 (NTAIEHTVDLITDKHHPLAKAAKDA) the chain is on the cytoplasmic side. The helical transmembrane segment at 100 to 120 (AAGAVCVFAVISCIIGLLIFL) threads the bilayer. Topologically, residues 121-123 (PKL) are extracellular.

The protein belongs to the bacterial diacylglycerol kinase family.

Its subcellular location is the cell membrane. The enzyme catalyses di-trans,octa-cis-undecaprenol + ATP = di-trans,octa-cis-undecaprenyl phosphate + ADP + H(+). Catalyzes the phosphorylation of undecaprenol in vitro, which is probably the physiological substrate. Exhibits no detectable activity against other substrates such as monoacylglycerol, ceramide, or diacylglycerol (DAG). Appears indispensable for the maintenance of spore stability and viability in B.subtilis. The sequence is that of Undecaprenol kinase (dgkA) from Bacillus subtilis (strain 168).